Here is a 619-residue protein sequence, read N- to C-terminus: DNA mismatch repair protein MutL (619 aa).

The protein belongs to the DNA mismatch repair MutL/HexB family.

This protein is involved in the repair of mismatches in DNA. It is required for dam-dependent methyl-directed DNA mismatch repair. May act as a 'molecular matchmaker', a protein that promotes the formation of a stable complex between two or more DNA-binding proteins in an ATP-dependent manner without itself being part of a final effector complex. This Myxococcus xanthus (strain DK1622) protein is DNA mismatch repair protein MutL.